Here is a 134-residue protein sequence, read N- to C-terminus: ATP synthase epsilon chain (134 aa).

Residues 94-104 (AKLAKSRAESH) show a composition bias toward basic and acidic residues. Positions 94-115 (AKLAKSRAESHLEEDDDNTDIN) are disordered.

This sequence belongs to the ATPase epsilon chain family. As to quaternary structure, F-type ATPases have 2 components, CF(1) - the catalytic core - and CF(0) - the membrane proton channel. CF(1) has five subunits: alpha(3), beta(3), gamma(1), delta(1), epsilon(1). CF(0) has three main subunits: a, b and c.

The protein resides in the cell membrane. Functionally, produces ATP from ADP in the presence of a proton gradient across the membrane. The chain is ATP synthase epsilon chain from Staphylococcus epidermidis (strain ATCC 35984 / DSM 28319 / BCRC 17069 / CCUG 31568 / BM 3577 / RP62A).